Reading from the N-terminus, the 56-residue chain is Conotoxin Cal6.41b (56 aa).

The first 23 residues, 1–23 (MSGSGAMLLGLLILVAMATSLDT), serve as a signal peptide directing secretion. Cystine bridges form between Cys-27/Cys-41, Cys-33/Cys-50, and Cys-40/Cys-54.

As to expression, expressed by the venom duct.

It localises to the secreted. In terms of biological role, probable neurotoxin. The polypeptide is Conotoxin Cal6.41b (Californiconus californicus (California cone)).